A 454-amino-acid polypeptide reads, in one-letter code: Divalent metal cation transporter MntH (454 aa).

The tract at residues 1–21 (MSDAEATAPRSSWRFAGRDED) is disordered. Transmembrane regions (helical) follow at residues 45-65 (LFAF…PGNW), 78-98 (TLLF…ALAA), 122-142 (FVLW…EVIG), 153-173 (IPLI…LLLM), 182-202 (AFVI…IFVA), 220-240 (IVTN…TVMP), 275-295 (IALM…AVAF), 312-332 (LLSP…ALLA), 368-388 (GLAI…GTGQ), 389-409 (LLVF…VPLV), and 426-446 (GVAA…FKLL).

It belongs to the NRAMP family.

Its subcellular location is the cell inner membrane. Its function is as follows. H(+)-stimulated, divalent metal cation uptake system. This chain is Divalent metal cation transporter MntH, found in Mesorhizobium japonicum (strain LMG 29417 / CECT 9101 / MAFF 303099) (Mesorhizobium loti (strain MAFF 303099)).